Consider the following 273-residue polypeptide: MNSRVHQGHFARKRFGQNFLNDQYIIDSIVNAIHPQRGEAVVEIGPGLGALTEPVGERLDNMTVVELDRDLAARLQTHPFLGPKLTIFQQDAMTFDFAALAQEKGQPLRVFGNLPYNISTPLMFHLFSYVGAIKDMHFMLQKEVVNRLVAGPGSKAYGRLTVMAQYYCQVIPVLEVPPESFTPAPKVDSAVVRLMPYAQPPHPVNDIRALSRITTEAFGKRRKTLRNSLGHLFTVDVLAEMNIDPTLRAENITVAQYCQLANWLTAHPQPQEN.

The S-adenosyl-L-methionine site is built by Asn18, Leu20, Gly45, Glu66, Asp91, and Asn113.

It belongs to the class I-like SAM-binding methyltransferase superfamily. rRNA adenine N(6)-methyltransferase family. RsmA subfamily.

Its subcellular location is the cytoplasm. It catalyses the reaction adenosine(1518)/adenosine(1519) in 16S rRNA + 4 S-adenosyl-L-methionine = N(6)-dimethyladenosine(1518)/N(6)-dimethyladenosine(1519) in 16S rRNA + 4 S-adenosyl-L-homocysteine + 4 H(+). In terms of biological role, specifically dimethylates two adjacent adenosines (A1518 and A1519) in the loop of a conserved hairpin near the 3'-end of 16S rRNA in the 30S particle. May play a critical role in biogenesis of 30S subunits. The protein is Ribosomal RNA small subunit methyltransferase A of Erwinia tasmaniensis (strain DSM 17950 / CFBP 7177 / CIP 109463 / NCPPB 4357 / Et1/99).